Reading from the N-terminus, the 139-residue chain is Large ribosomal subunit protein uL16 (139 aa).

Belongs to the universal ribosomal protein uL16 family. As to quaternary structure, part of the 50S ribosomal subunit.

In terms of biological role, binds 23S rRNA and is also seen to make contacts with the A and possibly P site tRNAs. This is Large ribosomal subunit protein uL16 from Chlorobium luteolum (strain DSM 273 / BCRC 81028 / 2530) (Pelodictyon luteolum).